Reading from the N-terminus, the 92-residue chain is Small ribosomal subunit protein uS19 (92 aa).

The interval Gly72–Gly92 is disordered.

Belongs to the universal ribosomal protein uS19 family.

Its function is as follows. Protein S19 forms a complex with S13 that binds strongly to the 16S ribosomal RNA. This is Small ribosomal subunit protein uS19 from Gluconobacter oxydans (strain 621H) (Gluconobacter suboxydans).